The following is a 276-amino-acid chain: B3 domain-containing protein REM22 (276 aa).

The segment at residues Ser11–Gly115 is a DNA-binding region (TF-B3). Residues Gly141–Lys164 form a disordered region. Residues Glu144–Arg154 are compositionally biased toward basic and acidic residues.

The protein localises to the nucleus. The chain is B3 domain-containing protein REM22 (REM22) from Arabidopsis thaliana (Mouse-ear cress).